Reading from the N-terminus, the 198-residue chain is Small ribosomal subunit protein uS2 (198 aa).

Belongs to the universal ribosomal protein uS2 family.

This chain is Small ribosomal subunit protein uS2 (rps2), found in Methanothermobacter thermautotrophicus (strain ATCC 29096 / DSM 1053 / JCM 10044 / NBRC 100330 / Delta H) (Methanobacterium thermoautotrophicum).